We begin with the raw amino-acid sequence, 38 residues long: Mu-agatoxin-Hc1b (38 aa).

Disulfide bonds link C3–C19, C10–C24, C18–C34, and C26–C32. Residue S38 is modified to Serine amide.

This sequence belongs to the neurotoxin 07 (Beta/delta-agtx) family. 02 (aga-3) subfamily. In terms of tissue distribution, expressed by the venom gland.

The protein localises to the secreted. In terms of biological role, insecticidal neurotoxin that induces irreversible neuromuscular blockade in house crickets (A.domesticus). Modifies presynaptic voltage-gated sodium channels (Nav), causing them to open at the normal resting potential of the nerve. This leads to spontaneous release of neurotransmitter and repetitive action potentials in motor neurons. This Hololena curta (Funnel-web spider) protein is Mu-agatoxin-Hc1b.